A 487-amino-acid polypeptide reads, in one-letter code: Selenium-binding protein 2 (487 aa).

Residue alanine 2 is modified to N-acetylalanine. Cysteine 19 and cysteine 20 together coordinate selenite.

The protein belongs to the selenium-binding protein family. In terms of tissue distribution, mostly expressed in seedlings, leaves and stems, and, to a lower extent, in flowers and roots.

In terms of biological role, required for the fusion of female gametophyte polar nuclei. The sequence is that of Selenium-binding protein 2 (SBP2) from Arabidopsis thaliana (Mouse-ear cress).